Here is a 161-residue protein sequence, read N- to C-terminus: Epoxidase gkaX (161 aa).

The first 18 residues, 1–18, serve as a signal peptide directing secretion; that stretch reads MSLSTSLRLLRLLPAISS. Asparagine 45 carries N-linked (GlcNAc...) asparagine glycosylation. The next 3 helical transmembrane spans lie at 59-79, 92-112, and 139-159; these read WQWILIIGYPLNYLFGILNLV, IWYVLGLFFSVGHMLFVKMAL, and WVRALITDLPAWICWIMAAVS.

It belongs to the epoxidase xenD family.

It is found in the membrane. It functions in the pathway mycotoxin biosynthesis. Functionally, epoxidase; part of the gene cluster that mediates the biosynthesis of GKK1032, fungal natural products containing a macrocyclic para-cyclophane connected to a decahydrofluorene ring system that show potent antitumor activities. Within the pathway, gkaX functions synergistically with gkaB and gkaZ to form the cyclophane. The pathway begins with the PKS-NRPS gkaA which, with the help of the trans-enoyl reductase gkaC, synthesizes the polyketide-tyrosyl acyl thioester product which can be reductively off-loaded by the terminal reductase (R) domain in gkaA. The alpha/beta hydrolase gkaG is then required to catalyze the subsequent Knoevenagel condensation that affords the 3-pyrrolin-2-one ring, whereas the three proteins gkaB, gkaX and gkaZ then function synergistically to form the cyclophane. The chain is Epoxidase gkaX from Penicillium citrinum.